Reading from the N-terminus, the 163-residue chain is MTRITARPLTREAFAPFGDVIDMGGDNHYPINGGKAERYHDLATAEATGPNARVLISMVRGTPYELPLKLTMVERHPFGSQAFIPLSPRPFLVVVCHDGKEGPGEPYAFITAPGQGINYSRNLWHGVLTPLGEPQDFLIVDRGGDGSNLEEFHFSHAYEIHLP.

It belongs to the ureidoglycolate lyase family. As to quaternary structure, homodimer. Ni(2+) is required as a cofactor.

The catalysed reaction is (S)-ureidoglycolate = urea + glyoxylate. The protein operates within nitrogen metabolism; (S)-allantoin degradation. In terms of biological role, catalyzes the catabolism of the allantoin degradation intermediate (S)-ureidoglycolate, generating urea and glyoxylate. Involved in the utilization of allantoin as nitrogen source. The protein is Ureidoglycolate lyase of Mesorhizobium japonicum (strain LMG 29417 / CECT 9101 / MAFF 303099) (Mesorhizobium loti (strain MAFF 303099)).